Consider the following 495-residue polypeptide: DUF21 domain-containing protein At4g14230 (495 aa).

The Extracellular segment spans residues 1–42 (MHPINAVVAARMLAGISQSNALQSEAIPFGSLEWITYAGISC). Residues 30–212 (GSLEWITYAG…GKGGELTHDE (183 aa)) enclose the CNNM transmembrane domain. Residues 43-63 (FLVLFAGIMSGLTLGLMSLGL) form a helical membrane-spanning segment. Topologically, residues 64–92 (VELEILQRSGTPKEKKQSAAIFPVVQKQH) are cytoplasmic. A helical membrane pass occupies residues 93-113 (QLLVTLLLFNALAMEGLPIYL). The Extracellular segment spans residues 114–120 (DKIFNEY). Residues 121 to 141 (VAIILSVTFVLFVGEVIPQAI) traverse the membrane as a helical segment. Topologically, residues 142–146 (CTRYG) are cytoplasmic. A helical transmembrane segment spans residues 147 to 167 (LAVGANLVWLVRILMVLSYPI). Residues 168–495 (SFPIAKMLDW…TMTGPPQGNN (328 aa)) lie on the Extracellular side of the membrane. 3 consecutive CBS domains span residues 231–291 (MTPI…TGTL), 296–356 (GIRR…NNSE), and 357–426 (LTAP…IVDE). Residues 330-354 (KGKSKGHPSTLHEENSGESNVSSNN) form a disordered region. N-linked (GlcNAc...) asparagine glycosylation occurs at Asn349. Ser352 carries the post-translational modification Phosphoserine. N-linked (GlcNAc...) asparagine glycosylation is present at Asn353. Positions 455-495 (SGRRLLGPKGSGGPKTPKASSTPKPDDKLMGTMTGPPQGNN) are disordered. Positions 456-477 (GRRLLGPKGSGGPKTPKASSTP) are enriched in low complexity.

It localises to the membrane. In Arabidopsis thaliana (Mouse-ear cress), this protein is DUF21 domain-containing protein At4g14230 (CBSDUF2).